A 694-amino-acid chain; its full sequence is Nuclear cap-binding protein subunit 3 (694 aa).

Residues 1–47 are disordered; that stretch reads MAAVRSLRVSVKSDSASDRSESDSESDSDRDAREAEPMEVEEGEVEL. Over residues 15-36 the composition is skewed to basic and acidic residues; the sequence is SASDRSESDSESDSDRDAREAE. Positions 37-47 are enriched in acidic residues; sequence PMEVEEGEVEL. Positions 126-187 are RNA recognition motif (RRM) domain; the sequence is EALHMSGVDD…LSRMPDKEEV (62 aa). A WLDD motif; essential for 7-methylguanosine-containing mRNA cap binding motif is present at residues 155–158; the sequence is WIDD. Disordered regions lie at residues 183–277, 336–430, and 461–694; these read DKEE…VKPF, ILKT…MDYD, and LRNS…DSDS. Over residues 189-203 the composition is skewed to polar residues; that stretch reads NTDSSKPSELPVQTQ. A compositionally biased stretch (acidic residues) spans 212–235; that stretch reads DDDDDDDEEEEGEVDDDDDDDEED. The span at 236-264 shows a compositional bias: basic and acidic residues; that stretch reads EKARDIEDETEKKPQETRETSLSQAERDS. Acidic residues predominate over residues 368–386; sequence EPIEEEEEEEEDGEEDMDA. Residues 387-404 are compositionally biased toward basic and acidic residues; sequence DDRVVEYKDRGEKERGPR. A compositionally biased stretch (gly residues) spans 477–496; sequence IGGGGGGGSGGAVEGRGEGG. 3 stretches are compositionally biased toward basic and acidic residues: residues 501-517, 563-595, and 605-618; these read TSEK…EKRQ, SRRE…DKKT, and SHKD…DKPS. A compositionally biased stretch (acidic residues) spans 634–646; sequence DSDGVEDEDEEDD. A compositionally biased stretch (low complexity) spans 685–694; sequence DGSNGSDSDS.

This sequence belongs to the NCBP3 family. Component of an alternative cap-binding complex (CBC) composed of NCBP1/CBP80 and NCBP3.

The protein localises to the nucleus. Its subcellular location is the cytoplasm. In terms of biological role, associates with NCBP1/CBP80 to form an alternative cap-binding complex (CBC) which plays a key role in mRNA export. NCBP3 serves as adapter protein linking the capped RNAs (m7GpppG-capped RNA) to NCBP1/CBP80. Unlike the conventional CBC with NCBP2 which binds both small nuclear RNA (snRNA) and messenger (mRNA) and is involved in their export from the nucleus, the alternative CBC with NCBP3 does not bind snRNA and associates only with mRNA thereby playing a role in only mRNA export. In Danio rerio (Zebrafish), this protein is Nuclear cap-binding protein subunit 3.